A 69-amino-acid chain; its full sequence is Amphipathic peptide OcyC2 (69 aa).

The first 23 residues, 1–23 (MKTQFAILMIAVVLMQMLVQTEG), serve as a signal peptide directing secretion. Position 37 is an isoleucine amide (Ile-37). A propeptide spanning residues 41 to 69 (GLKKLDQLDDTFDSDLSDADVKLLREMFK) is cleaved from the precursor.

Belongs to the non-disulfide-bridged peptide (NDBP) superfamily. Short antimicrobial peptide (group 4) family. As to expression, expressed by the venom gland.

The protein localises to the secreted. It localises to the target cell membrane. Amphipathic peptide with antimicrobial activity. Shows antifungal activity with MIC values ranging from 25 to 200 uM. Does not show antifungal activity against Candida glabrata (ATCC90030) and Candida parapsilosis (ATCC22019) (MIC&gt;400 uM). The chain is Amphipathic peptide OcyC2 from Opisthacanthus cayaporum (South American scorpion).